Reading from the N-terminus, the 331-residue chain is Hydroxysteroid dehydrogenase-like protein 1 (331 aa).

The tract at residues 2-82 (AAVDRFNLLY…TGSTDGIGKA (81 aa)) is required for mitochondria translocation. Residues 74–80 (GSTDGIG) and Asp-125 contribute to the NADP(+) site. Ser-205 is a binding site for substrate. Tyr-218 functions as the Proton acceptor in the catalytic mechanism. Position 222 (Lys-222) interacts with NADP(+).

The protein belongs to the short-chain dehydrogenases/reductases (SDR) family. 17-beta-HSD 3 subfamily.

The protein resides in the mitochondrion. May catalyze the metabolism of steroid hormones and thus play an important role in sex differentiation, the emergence and maintenance of the secondary sexual characters, and the regulation of endocrine. The protein is Hydroxysteroid dehydrogenase-like protein 1 (HSDL1) of Gallus gallus (Chicken).